Here is a 104-residue protein sequence, read N- to C-terminus: L-rhamnose mutarotase (104 aa).

Tyrosine 18 is a substrate binding site. The Proton donor role is filled by histidine 22. Residues tyrosine 41 and 76 to 77 (WW) contribute to the substrate site.

Belongs to the rhamnose mutarotase family. In terms of assembly, homodimer.

It localises to the cytoplasm. The enzyme catalyses alpha-L-rhamnose = beta-L-rhamnose. Its pathway is carbohydrate metabolism; L-rhamnose metabolism. Its function is as follows. Involved in the anomeric conversion of L-rhamnose. The sequence is that of L-rhamnose mutarotase from Salmonella arizonae (strain ATCC BAA-731 / CDC346-86 / RSK2980).